Consider the following 427-residue polypeptide: MLDIKWIRENAGVLDNALAKRGAEPLSASLIALDERRRTVLQSLQEMQSRRNAASKEIGAAMAQKNSELAEKLKAEVAELKDALPAAEEESRRMEAELTDILSRIPNVPLEDVPVGPDESGNVVKRLVGSKPTWNHKPLEHFEIGEGLGFMDFEGAARIAGSRFTILKGQLARLERALGQFMLDLHTQEHGYIEVQPPLLVRDDAMYGTGQLPKFAEDLFRTTDGRWLIPTAEVPLTNMVREQILEGEKLPLRFTALTPCFRSEAGSAGRDTRGMLRQHQFNKVELVSLTDAETSVDEHERMTACAEEVLKRLGLHYRVMTLCTGDMGFGARKTYDLEVWLPGQDAYREISSCSVCGDFQARRMNARYRSKEEKGTKFVHTLNGSGVAVGRALIAVIENYLNEDGSVSVPEVLVPYMGGLRRVEKAA.

231 to 233 contacts L-serine; it reads TAE. An ATP-binding site is contributed by 262–264; sequence RSE. An L-serine-binding site is contributed by E285. 349–352 serves as a coordination point for ATP; that stretch reads EISS. Residue S385 participates in L-serine binding.

The protein belongs to the class-II aminoacyl-tRNA synthetase family. Type-1 seryl-tRNA synthetase subfamily. As to quaternary structure, homodimer. The tRNA molecule binds across the dimer.

It is found in the cytoplasm. The catalysed reaction is tRNA(Ser) + L-serine + ATP = L-seryl-tRNA(Ser) + AMP + diphosphate + H(+). It carries out the reaction tRNA(Sec) + L-serine + ATP = L-seryl-tRNA(Sec) + AMP + diphosphate + H(+). The protein operates within aminoacyl-tRNA biosynthesis; selenocysteinyl-tRNA(Sec) biosynthesis; L-seryl-tRNA(Sec) from L-serine and tRNA(Sec): step 1/1. Its function is as follows. Catalyzes the attachment of serine to tRNA(Ser). Is also able to aminoacylate tRNA(Sec) with serine, to form the misacylated tRNA L-seryl-tRNA(Sec), which will be further converted into selenocysteinyl-tRNA(Sec). This Sinorhizobium fredii (strain NBRC 101917 / NGR234) protein is Serine--tRNA ligase.